We begin with the raw amino-acid sequence, 125 residues long: Glycine cleavage system H protein (125 aa).

The Lipoyl-binding domain maps to 19–101 (VAVVGISDYA…EGKGWFMKLK (83 aa)). Residue K60 is modified to N6-lipoyllysine.

It belongs to the GcvH family. The glycine cleavage system is composed of four proteins: P, T, L and H. (R)-lipoate is required as a cofactor.

Its function is as follows. The glycine cleavage system catalyzes the degradation of glycine. The H protein shuttles the methylamine group of glycine from the P protein to the T protein. The sequence is that of Glycine cleavage system H protein from Xanthobacter autotrophicus (strain ATCC BAA-1158 / Py2).